The primary structure comprises 307 residues: Heme A synthase (307 aa).

Topologically, residues 1-8 (MQHNRYLK) are cytoplasmic. A helical transmembrane segment spans residues 9–29 (WFAVAATVGMLLILLGGALVT). Residues 30-56 (KTDSGLGCGRNWPDCNGSLIPKEITPE) lie on the Extracellular side of the membrane. A disulfide bridge links C37 with C44. Residues 57-77 (VLIEFSHRLVTGVVSISILVL) form a helical membrane-spanning segment. E60 is a catalytic residue. Heme o is bound at residue H63. Residues 78–92 (TVWTWRKLGHIREVK) lie on the Cytoplasmic side of the membrane. A helical transmembrane segment spans residues 93–113 (LLGFLAMFFLIAQALIGAAQV). At 114 to 123 (LWGQGDFILA) the chain is on the extracellular side. The helical transmembrane segment at 124-144 (LHFGISLISFAAVLLLSMIVF) threads the bilayer. H125 lines the heme o pocket. Residues 145 to 161 (EVDRKFDADNVFIGKKL) lie on the Cytoplasmic side of the membrane. The chain crosses the membrane as a helical span at residues 162 to 182 (RWHTIAVTIYSYLVVYTGALV). The Extracellular portion of the chain corresponds to 183–218 (RHTDSSLICPDWPFCYNETPLASPNNMYEWVQMGHR). A disulfide bridge connects residues C191 and C197. Residue H217 coordinates heme b. The helical transmembrane segment at 219 to 239 (LAVLIIFIWIAYITWHAVKEY) threads the bilayer. Over 240–247 (KNQRVVYY) the chain is Cytoplasmic. Residues 248-268 (GWIIAFTIVFLQVIAGMLVVL) form a helical membrane-spanning segment. The Extracellular portion of the chain corresponds to 269–276 (TKLNLTVA). Residues 277–297 (LMHSLLISLLFGLLCYMIMLV) form a helical membrane-spanning segment. Residue H279 coordinates heme b. The Cytoplasmic portion of the chain corresponds to 298-307 (ARSNYNEKMK).

This sequence belongs to the COX15/CtaA family. Type 1 subfamily. As to quaternary structure, interacts with CtaB. The cofactor is heme b.

It localises to the cell membrane. The catalysed reaction is Fe(II)-heme o + 2 A + H2O = Fe(II)-heme a + 2 AH2. Its pathway is porphyrin-containing compound metabolism; heme A biosynthesis; heme A from heme O: step 1/1. Catalyzes the conversion of heme O to heme A by two successive hydroxylations of the methyl group at C8. The first hydroxylation forms heme I, the second hydroxylation results in an unstable dihydroxymethyl group, which spontaneously dehydrates, resulting in the formyl group of heme A. The sequence is that of Heme A synthase from Lysinibacillus sphaericus (strain C3-41).